The primary structure comprises 72 residues: MEKKMAGFCIFFLVLFLAQEYGVEGKVCLNLSDKFKGPCLGTKNCDHHCRDIEHLLSGVCRDDFRCWCNRNC.

Residues 1–25 (MEKKMAGFCIFFLVLFLAQEYGVEG) form the signal peptide. 3 disulfide bridges follow: C28/C72, C39/C60, and C45/C66.

The protein belongs to the DEFL family. May form dimers. Post-translationally, not glycosylated. Has 4 disulfide bonds.

Functionally, probably has antifungal activity. The sequence is that of Defensin 3 from Arachis hypogaea (Peanut).